Consider the following 349-residue polypeptide: Core protein VP7 (349 aa).

Asn287 carries an N-linked (GlcNAc...) asparagine; by host glycan.

It belongs to the orbivirus VP7 family. In terms of assembly, homotrimer that assemble in a complex of 260 capsomers on an inner scaffold composed of VP3.

The protein localises to the virion. Its function is as follows. The VP7 protein is one of the five proteins (with VP1, VP3, VP4, and VP6) which form the inner capsid of the virus. This is Core protein VP7 (Segment-7) from Antilocapra americana (Pronghorn).